Here is a 464-residue protein sequence, read N- to C-terminus: tRNA modification GTPase MnmE (464 aa).

Residues R27, E90, and K129 each contribute to the (6S)-5-formyl-5,6,7,8-tetrahydrofolate site. A TrmE-type G domain is found at G222 to S384. GTP is bound by residues N232–S237, S251–T257, and D276–G279. The Mg(2+) site is built by S236 and T257. Residue K464 coordinates (6S)-5-formyl-5,6,7,8-tetrahydrofolate.

Belongs to the TRAFAC class TrmE-Era-EngA-EngB-Septin-like GTPase superfamily. TrmE GTPase family. Homodimer. Heterotetramer of two MnmE and two MnmG subunits. K(+) is required as a cofactor.

It localises to the cytoplasm. Exhibits a very high intrinsic GTPase hydrolysis rate. Involved in the addition of a carboxymethylaminomethyl (cmnm) group at the wobble position (U34) of certain tRNAs, forming tRNA-cmnm(5)s(2)U34. The polypeptide is tRNA modification GTPase MnmE (Borrelia garinii subsp. bavariensis (strain ATCC BAA-2496 / DSM 23469 / PBi) (Borreliella bavariensis)).